The chain runs to 866 residues: Putative linoleate 9S-lipoxygenase 3 (866 aa).

In terms of domain architecture, PLAT spans asparagine 33–alanine 161. The Lipoxygenase domain occupies alanine 164–isoleucine 866. The interval tyrosine 206–leucine 250 is disordered. Residues histidine 521, histidine 526, histidine 712, asparagine 716, and isoleucine 866 each coordinate Fe cation.

This sequence belongs to the lipoxygenase family. It depends on Fe cation as a cofactor.

The catalysed reaction is (9Z,12Z)-octadecadienoate + O2 = (9S)-hydroperoxy-(10E,12Z)-octadecadienoate. It participates in lipid metabolism; oxylipin biosynthesis. Plant lipoxygenase may be involved in a number of diverse aspects of plant physiology including growth and development, pest resistance, and senescence or responses to wounding. Catalyzes the hydroperoxidation of lipids containing a cis,cis-1,4-pentadiene structure. The sequence is that of Putative linoleate 9S-lipoxygenase 3 from Oryza sativa subsp. japonica (Rice).